A 629-amino-acid polypeptide reads, in one-letter code: tRNA uridine 5-carboxymethylaminomethyl modification enzyme MnmG (629 aa).

FAD contacts are provided by residues 15 to 20 (GAGHAG), valine 127, and serine 182. A disordered region spans residues 203 to 226 (TPPRVKSSTIDYSKTEEQPGDDHP). Residues 215–226 (SKTEEQPGDDHP) show a composition bias toward basic and acidic residues. NAD(+) is bound at residue 274-288 (GARYCPSIEDKIVRF). Residue glutamine 371 participates in FAD binding.

The protein belongs to the MnmG family. In terms of assembly, homodimer. Heterotetramer of two MnmE and two MnmG subunits. It depends on FAD as a cofactor.

The protein resides in the cytoplasm. Its function is as follows. NAD-binding protein involved in the addition of a carboxymethylaminomethyl (cmnm) group at the wobble position (U34) of certain tRNAs, forming tRNA-cmnm(5)s(2)U34. The chain is tRNA uridine 5-carboxymethylaminomethyl modification enzyme MnmG from Listeria innocua serovar 6a (strain ATCC BAA-680 / CLIP 11262).